A 496-amino-acid polypeptide reads, in one-letter code: Probable cytosol aminopeptidase (496 aa).

The Mn(2+) site is built by lysine 262 and aspartate 267. Residue lysine 274 is part of the active site. Residues aspartate 285, aspartate 344, and glutamate 346 each contribute to the Mn(2+) site. The active site involves arginine 348.

The protein belongs to the peptidase M17 family. It depends on Mn(2+) as a cofactor.

The protein resides in the cytoplasm. It catalyses the reaction Release of an N-terminal amino acid, Xaa-|-Yaa-, in which Xaa is preferably Leu, but may be other amino acids including Pro although not Arg or Lys, and Yaa may be Pro. Amino acid amides and methyl esters are also readily hydrolyzed, but rates on arylamides are exceedingly low.. The catalysed reaction is Release of an N-terminal amino acid, preferentially leucine, but not glutamic or aspartic acids.. Functionally, presumably involved in the processing and regular turnover of intracellular proteins. Catalyzes the removal of unsubstituted N-terminal amino acids from various peptides. In Rhizobium johnstonii (strain DSM 114642 / LMG 32736 / 3841) (Rhizobium leguminosarum bv. viciae), this protein is Probable cytosol aminopeptidase.